The chain runs to 413 residues: Protein LAZY 1 (413 aa).

Residues 71–91 form a helical membrane-spanning segment; it reads FTFGGSGLLTIGTLGIAAVAV. Positions 103–124 are enriched in acidic residues; sequence DADADSDFDDNDDTAGDDEDQV. Disordered regions lie at residues 103–127 and 261–308; these read DADA…VDSA and EDGG…ASAT. 2 consecutive short sequence motifs (nuclear localization signal) follow at residues 275 to 298 and 338 to 345; these read RKAG…EKVP and KKSRKRGS.

Belongs to the LAZY family. As to expression, expressed in the node of the stem, initiating leaf founder cells, young leaf primordia, tips of axillary meristems, spikelet pair meristems of developing tassels and ears, male flower primordia, tassels, ears, silks and seeds. Expressed in leaf sheaths, leaf pulvinus and shoot apical meristem (SAM).

The protein resides in the cell membrane. Its subcellular location is the nucleus. Functionally, involved in the regulation of shoot gravitropism, and tassel and ear development through the regulation of polar auxin transport (PAT) and auxin signaling. Acts as a negative regulator of basipetal PAT, but positive regulator of lateral auxin transport. Involved in the regulation of shoot gravitropism and leaf angle through the regulation of cell development. In Zea mays (Maize), this protein is Protein LAZY 1.